Here is a 448-residue protein sequence, read N- to C-terminus: Amino-acid acetyltransferase (448 aa).

The region spanning Glu295–Arg433 is the N-acetyltransferase domain.

The protein belongs to the acetyltransferase family. ArgA subfamily. In terms of assembly, homohexamer.

The protein resides in the cytoplasm. It catalyses the reaction L-glutamate + acetyl-CoA = N-acetyl-L-glutamate + CoA + H(+). Its pathway is amino-acid biosynthesis; L-arginine biosynthesis; N(2)-acetyl-L-ornithine from L-glutamate: step 1/4. The chain is Amino-acid acetyltransferase from Photorhabdus laumondii subsp. laumondii (strain DSM 15139 / CIP 105565 / TT01) (Photorhabdus luminescens subsp. laumondii).